Consider the following 704-residue polypeptide: Rabphilin-3A (704 aa).

Residues Met1–Arg12 show a composition bias toward polar residues. Residues Met1–Asp52 are disordered. Residues Gln44–Gly161 form the RabBD domain. The FYVE-type zinc-finger motif lies at Gly92–Glu149. Positions 98, 101, 115, 118, 123, 126, 141, and 144 each coordinate Zn(2+). The tract at residues Leu167–Asp398 is disordered. The span at Thr205–Gly214 shows a compositional bias: basic and acidic residues. Arg229 bears the Omega-N-methylarginine mark. At Ser277 the chain carries Phosphoserine. Residues Gln279–Ser290 show a composition bias toward low complexity. Positions Pro291–Gly310 are enriched in pro residues. A compositionally biased stretch (low complexity) spans Gln366–Arg380. The span at Pro385–Asp398 shows a compositional bias: acidic residues. The 123-residue stretch at Thr402 to Ile524 folds into the C2 1 domain. The Ca(2+) site is built by Met432, Asp433, Asp439, Asp494, Glu495, Asp496, Glu502, Glu549, Asp591, Asp597, Asp651, Tyr652, Asp653, and Asp659. A C2 2 domain is found at Glu560 to His693. 2 positions are modified to phosphoserine: Ser702 and Ser703.

As to quaternary structure, interacts with RAB3B, RAB3C, RAB3D, RAB8A, RAB27A and RAB27B. Interacts with RAB3A; this interaction recruits RPH3A to synaptic vesicules. Interacts (via C2B domain) with SNAP25. Interacts with deubiquitinating enzyme CAND1; this interaction results in the deubiquitination of RPH3A. Interacts with GRIN2A and DLG4; this ternary complex regulates NMDA receptor composition at postsynaptic membranes. Interacts with SNCA. It depends on Ca(2+) as a cofactor. In terms of processing, ubiquitinated. Deubiquitinated by CAND1 to prevent its degradation. In terms of tissue distribution, specifically expressed in brain.

It localises to the cytoplasmic vesicle. The protein resides in the secretory vesicle. Its subcellular location is the synaptic vesicle membrane. The protein localises to the cell projection. It is found in the dendritic spine. It localises to the postsynaptic cell membrane. The protein resides in the membrane. Its function is as follows. Plays an essential role in docking and fusion steps of regulated exocytosis. At the presynaptic level, RPH3A is recruited by RAB3A to the synaptic vesicle membrane in a GTP-dependent manner where it modulates synaptic vesicle trafficking and calcium-triggered neurotransmitter release. In the post-synaptic compartment, forms a ternary complex with GRIN2A and DLG4 and regulates NMDA receptor stability. Also plays a role in the exocytosis of arginine vasopressin hormone. The sequence is that of Rabphilin-3A (RPH3A) from Bos taurus (Bovine).